The following is a 96-amino-acid chain: ATP-dependent Clp protease adapter protein ClpS (96 aa).

This sequence belongs to the ClpS family. As to quaternary structure, binds to the N-terminal domain of the chaperone ClpA.

Functionally, involved in the modulation of the specificity of the ClpAP-mediated ATP-dependent protein degradation. The protein is ATP-dependent Clp protease adapter protein ClpS of Campylobacter jejuni subsp. doylei (strain ATCC BAA-1458 / RM4099 / 269.97).